The following is a 1111-amino-acid chain: Atrial natriuretic peptide-converting enzyme (1111 aa).

At 1 to 112 (MGRVSFNVRV…QKLVTANLLR (112 aa)) the chain is on the cytoplasmic side. Residues 93 to 96 (ADSS) carry the DDNN motif motif. The chain crosses the membrane as a helical; Signal-anchor for type II membrane protein span at residues 113–133 (FLLLVLIPCICALIVLLAILL). At 134-1111 (SFVGTLKKVY…QTFLQKKSQG (978 aa)) the chain is on the extracellular side. An N-linked (GlcNAc...) asparagine glycan is attached at asparagine 147. The region spanning 199–325 (GNTSTCVNIT…SDASRICFSL (127 aa)) is the FZ 1 domain. Disulfide bonds link cysteine 204-cysteine 264, cysteine 212-cysteine 257, cysteine 248-cysteine 288, cysteine 277-cysteine 322, cysteine 281-cysteine 305, cysteine 335-cysteine 348, cysteine 343-cysteine 361, cysteine 355-cysteine 370, cysteine 372-cysteine 384, cysteine 379-cysteine 397, cysteine 391-cysteine 406, cysteine 408-cysteine 421, cysteine 416-cysteine 434, cysteine 428-cysteine 443, cysteine 445-cysteine 458, cysteine 453-cysteine 471, cysteine 465-cysteine 480, cysteine 521-cysteine 584, cysteine 529-cysteine 577, cysteine 568-cysteine 606, cysteine 595-cysteine 636, cysteine 599-cysteine 623, cysteine 646-cysteine 658, cysteine 653-cysteine 671, cysteine 665-cysteine 680, cysteine 682-cysteine 696, cysteine 690-cysteine 709, cysteine 703-cysteine 718, cysteine 721-cysteine 733, cysteine 728-cysteine 746, and cysteine 740-cysteine 755. Asparagine 296 carries an N-linked (GlcNAc...) asparagine glycan. 4 LDL-receptor class A domains span residues 334–371 (LCGG…AHCN), 371–407 (NCSE…QNCD), 407–444 (DCNL…VNCS), and 444–481 (SCPS…ENCS). An N-linked (GlcNAc...) asparagine glycan is attached at asparagine 409. The FZ 2 domain occupies 516 to 639 (SNCSHCEPIT…SSDNQTCLLP (124 aa)). N-linked (GlcNAc...) asparagine glycosylation occurs at asparagine 535. LDL-receptor class A domains are found at residues 645 to 681 (ECSP…ENCG), 681 to 719 (GCKE…KNCS), and 720 to 756 (FCQD…WGCV). In terms of domain architecture, SRCR spans 756 to 851 (VTLSKNGNSS…SGSEISLLCT (96 aa)). N-linked (GlcNAc...) asparagine glycosylation occurs at asparagine 763. 4 disulfide bridges follow: cysteine 855-cysteine 977, cysteine 893-cysteine 909, cysteine 991-cysteine 1056, and cysteine 1020-cysteine 1035. The 234-residue stretch at 867 to 1100 (ILGGRTSRPG…FVDWIERQIY (234 aa)) folds into the Peptidase S1 domain. Catalysis depends on charge relay system residues histidine 908 and aspartate 957. The Charge relay system role is filled by serine 1050.

It belongs to the peptidase S1 family. N-glycosylated; required for processing and activation. In terms of processing, activated through proteolytic processing by a trypsin-like protease; cleaved into a N-terminal propeptide and an activated corin protease fragment. Atrial natriuretic peptide-converting enzyme, 180 kDa soluble fragment is produced by cleavage by ADAM10. Cleavage by ADAM10 to produce soluble 180 kDa soluble fragment takes place after the transmembrane region and before FZ 1. Post-translationally, a disulfide bond links the activated corin protease fragment and the N-terminal propeptide. The disulfide bond also links the activated corin protease fragment with Atrial natriuretic peptide-converting enzyme, 180 kDa soluble fragment. In terms of tissue distribution, specifically expressed in heart. Also detected in kidney, aorta, brain and testis. In kidney, present in epithelial cells, with segmental expression in the proximal tubule, thick ascending limb, connecting tubule, and throughout the collecting duct (at protein level).

It is found in the cell membrane. The protein resides in the cytoplasmic vesicle. Its subcellular location is the secreted. Serine-type endopeptidase involved in atrial natriuretic peptide (NPPA) processing. Converts through proteolytic cleavage the non-functional propeptide NPPA into the active hormone, thereby regulating blood pressure in heart and promoting natriuresis, diuresis and vasodilation. Proteolytic cleavage of pro-NPPA also plays a role in female pregnancy by promoting trophoblast invasion and spiral artery remodeling in uterus. Also acts as a regulator of sodium reabsorption in kidney. May also process pro-NPPB the B-type natriuretic peptide. The protein is Atrial natriuretic peptide-converting enzyme (Corin) of Rattus norvegicus (Rat).